The chain runs to 299 residues: Hairy/enhancer-of-split related with YRPW motif protein 1 (299 aa).

The tract at residues 1-53 (MKRAHPDYSSSDSELDETIEVEKESADENGNLSSALCSMSPTTSSQVLARKRR) is disordered. A compositionally biased stretch (polar residues) spans 28 to 47 (ENGNLSSALCSMSPTTSSQV). Residues 48–117 (LARKRRRGII…GGKGYFDAHA (70 aa)) form a transcriptional repression and interaction with NCOR1 and SIN3A region. Residues 49-104 (ARKRRRGIIEKRRRDRINNSLSELRRLVPSAFEKQGSAKLEKAEILQMTVDHLKML) enclose the bHLH domain. Residues 122 to 158 (YRSLGFRECLAEVARYLSIIEGLDASDPLLVRLVSHL) form the Orange domain. The tract at residues 194 to 234 (LLLPQNGHGNAGTAASPTEPHHQGRLASAHPEAPALRAPPS) is disordered. The YRPW motif signature appears at 289–292 (YRPW).

It belongs to the HEY family. As to quaternary structure, may self-associate. Interacts with HES1, NCOR1 and SIN3A. Interacts with GATA4, GATA6 and HDAC1 and HEYL. Interacts with CCDC89/BOIP. As to expression, expressed in somitic mesoderm, brain, central nervous system, kidney, heart, nasal epithelium, limbs, lung, muscle, ovary and testis.

The protein resides in the nucleus. Functionally, transcriptional repressor which binds preferentially to the canonical E box sequence 5'-CACGTG-3'. Downstream effector of Notch signaling required for cardiovascular development. Specifically required for the Notch-induced endocardial epithelial to mesenchymal transition, which is itself criticial for cardiac valve and septum development. May be required in conjunction with HEY2 to specify arterial cell fate or identity. Promotes maintenance of neuronal precursor cells and glial versus neuronal fate specification. Represses transcription by the cardiac transcriptional activators GATA4 and GATA6 and by the neuronal bHLH factors ASCL1/MASH1 and NEUROD4/MATH3. The chain is Hairy/enhancer-of-split related with YRPW motif protein 1 (Hey1) from Mus musculus (Mouse).